We begin with the raw amino-acid sequence, 504 residues long: Aspartyl/glutamyl-tRNA(Asn/Gln) amidotransferase subunit B (504 aa).

This sequence belongs to the GatB/GatE family. GatB subfamily. Heterotrimer of A, B and C subunits.

The enzyme catalyses L-glutamyl-tRNA(Gln) + L-glutamine + ATP + H2O = L-glutaminyl-tRNA(Gln) + L-glutamate + ADP + phosphate + H(+). The catalysed reaction is L-aspartyl-tRNA(Asn) + L-glutamine + ATP + H2O = L-asparaginyl-tRNA(Asn) + L-glutamate + ADP + phosphate + 2 H(+). Functionally, allows the formation of correctly charged Asn-tRNA(Asn) or Gln-tRNA(Gln) through the transamidation of misacylated Asp-tRNA(Asn) or Glu-tRNA(Gln) in organisms which lack either or both of asparaginyl-tRNA or glutaminyl-tRNA synthetases. The reaction takes place in the presence of glutamine and ATP through an activated phospho-Asp-tRNA(Asn) or phospho-Glu-tRNA(Gln). This chain is Aspartyl/glutamyl-tRNA(Asn/Gln) amidotransferase subunit B, found in Tropheryma whipplei (strain Twist) (Whipple's bacillus).